The sequence spans 259 residues: 4-hydroxy-tetrahydrodipicolinate reductase (259 aa).

NAD(+)-binding positions include 9–14 and Glu35; that span reads GAGGRM. An NADP(+)-binding site is contributed by Arg36. NAD(+) is bound by residues 92–94 and 116–119; these read GTT and APNM. Catalysis depends on His149, which acts as the Proton donor/acceptor. His150 serves as a coordination point for (S)-2,3,4,5-tetrahydrodipicolinate. Lys153 acts as the Proton donor in catalysis. (S)-2,3,4,5-tetrahydrodipicolinate is bound at residue 159-160; it reads GT.

This sequence belongs to the DapB family.

The protein localises to the cytoplasm. It carries out the reaction (S)-2,3,4,5-tetrahydrodipicolinate + NAD(+) + H2O = (2S,4S)-4-hydroxy-2,3,4,5-tetrahydrodipicolinate + NADH + H(+). It catalyses the reaction (S)-2,3,4,5-tetrahydrodipicolinate + NADP(+) + H2O = (2S,4S)-4-hydroxy-2,3,4,5-tetrahydrodipicolinate + NADPH + H(+). Its pathway is amino-acid biosynthesis; L-lysine biosynthesis via DAP pathway; (S)-tetrahydrodipicolinate from L-aspartate: step 4/4. Functionally, catalyzes the conversion of 4-hydroxy-tetrahydrodipicolinate (HTPA) to tetrahydrodipicolinate. The sequence is that of 4-hydroxy-tetrahydrodipicolinate reductase from Nitratidesulfovibrio vulgaris (strain DP4) (Desulfovibrio vulgaris).